The following is a 379-amino-acid chain: 23S rRNA (uracil(747)-C(5))-methyltransferase RlmC (379 aa).

[4Fe-4S] cluster contacts are provided by cysteine 3, cysteine 11, cysteine 14, and cysteine 86. 4 residues coordinate S-adenosyl-L-methionine: glutamine 211, phenylalanine 240, glutamate 262, and asparagine 310. The Nucleophile role is filled by cysteine 337.

This sequence belongs to the class I-like SAM-binding methyltransferase superfamily. RNA M5U methyltransferase family. RlmC subfamily.

It carries out the reaction uridine(747) in 23S rRNA + S-adenosyl-L-methionine = 5-methyluridine(747) in 23S rRNA + S-adenosyl-L-homocysteine + H(+). Catalyzes the formation of 5-methyl-uridine at position 747 (m5U747) in 23S rRNA. The sequence is that of 23S rRNA (uracil(747)-C(5))-methyltransferase RlmC from Halothiobacillus neapolitanus (strain ATCC 23641 / c2) (Thiobacillus neapolitanus).